Consider the following 1813-residue polypeptide: Nonribosomal peptide synthetase 1 (1813 aa).

The segment at 89–494 is adenylation; it reads EKARRDPSRQ…GRGDQQVKLR (406 aa). Residues 624-699 enclose the Carrier 1 domain; sequence EPQSERERQL…ELAITLKHSD (76 aa). Position 660 is an O-(pantetheine 4'-phosphoryl)serine (Ser-660). Residues 738–1159 form a condensation 1 region; that stretch reads DVYPCTTLQE…LPMTDDELAE (422 aa). The region spanning 1282 to 1358 is the Carrier 2 domain; it reads QVTTPKQQKL…DMADIAKESL (77 aa). Ser-1319 carries the O-(pantetheine 4'-phosphoryl)serine modification. Positions 1427-1806 are condensation 2; that stretch reads FYLDAAVDQS…STLFQTDVME (380 aa).

Belongs to the NRP synthetase family.

The protein operates within siderophore biosynthesis. Nonribosomal peptide synthetase; part of the gene cluster that mediates the biosynthesis of hydroxamate-containing siderophores that play a critical role in virulence via intracellular iron acquisition during macrophage infection. The polypeptide is Nonribosomal peptide synthetase 1 (Ajellomyces capsulatus (Darling's disease fungus)).